Reading from the N-terminus, the 476-residue chain is Casein kinase 1-like protein 7 (476 aa).

In terms of domain architecture, Protein kinase spans 9–278; it reads FKLGKKIGSG…LKRLFRDLFI (270 aa). ATP is bound by residues 15–23 and K38; that span reads IGSGSFGEL. Catalysis depends on D128, which acts as the Proton acceptor. Disordered stretches follow at residues 299–324 and 340–464; these read GSSS…DPIE and PGAV…TRED. The segment covering 357-367 has biased composition (basic and acidic residues); the sequence is PRDRSRSRNSD. Residues 382-422 show a composition bias toward low complexity; the sequence is ANSSSRYRASSSRKAVAASSSRPSSAGGPSESRTSSRLVSS. The segment covering 423–432 has biased composition (gly residues); sequence SGGGGSGSGN.

The protein belongs to the protein kinase superfamily. CK1 Ser/Thr protein kinase family. Casein kinase I subfamily. Monomer. Autophosphorylated.

It localises to the cytoplasm. The enzyme catalyses L-seryl-[protein] + ATP = O-phospho-L-seryl-[protein] + ADP + H(+). The catalysed reaction is L-threonyl-[protein] + ATP = O-phospho-L-threonyl-[protein] + ADP + H(+). In terms of biological role, casein kinases are operationally defined by their preferential utilization of acidic proteins such as caseins as substrates. It can phosphorylate a large number of proteins. This chain is Casein kinase 1-like protein 7, found in Arabidopsis thaliana (Mouse-ear cress).